The following is a 410-amino-acid chain: Peptidase T (410 aa).

H79 contributes to the Zn(2+) binding site. Residue D81 is part of the active site. Residue D142 coordinates Zn(2+). Residue E176 is the Proton acceptor of the active site. E177, D199, and H381 together coordinate Zn(2+).

It belongs to the peptidase M20B family. Zn(2+) is required as a cofactor.

It localises to the cytoplasm. The enzyme catalyses Release of the N-terminal residue from a tripeptide.. Its function is as follows. Cleaves the N-terminal amino acid of tripeptides. The protein is Peptidase T of Listeria innocua serovar 6a (strain ATCC BAA-680 / CLIP 11262).